The sequence spans 426 residues: Serine--tRNA ligase (426 aa).

235-237 is an L-serine binding site; sequence TAE. Residues 266–268 and Val282 each bind ATP; that span reads RRE. Glu289 provides a ligand contact to L-serine. Position 353–356 (353–356) interacts with ATP; it reads EASS. Residue Ser389 coordinates L-serine.

Belongs to the class-II aminoacyl-tRNA synthetase family. Type-1 seryl-tRNA synthetase subfamily. Homodimer. The tRNA molecule binds across the dimer.

Its subcellular location is the cytoplasm. It catalyses the reaction tRNA(Ser) + L-serine + ATP = L-seryl-tRNA(Ser) + AMP + diphosphate + H(+). It carries out the reaction tRNA(Sec) + L-serine + ATP = L-seryl-tRNA(Sec) + AMP + diphosphate + H(+). It functions in the pathway aminoacyl-tRNA biosynthesis; selenocysteinyl-tRNA(Sec) biosynthesis; L-seryl-tRNA(Sec) from L-serine and tRNA(Sec): step 1/1. Catalyzes the attachment of serine to tRNA(Ser). Is also able to aminoacylate tRNA(Sec) with serine, to form the misacylated tRNA L-seryl-tRNA(Sec), which will be further converted into selenocysteinyl-tRNA(Sec). This chain is Serine--tRNA ligase, found in Chlorobium chlorochromatii (strain CaD3).